A 366-amino-acid polypeptide reads, in one-letter code: Flagellar P-ring protein (366 aa).

An N-terminal signal peptide occupies residues 1–22 (MFTRKSVILMAVLLIWSAVSYA).

This sequence belongs to the FlgI family. In terms of assembly, the basal body constitutes a major portion of the flagellar organelle and consists of four rings (L,P,S, and M) mounted on a central rod.

It is found in the periplasm. It localises to the bacterial flagellum basal body. In terms of biological role, assembles around the rod to form the L-ring and probably protects the motor/basal body from shearing forces during rotation. The polypeptide is Flagellar P-ring protein (Hydrogenovibrio crunogenus (strain DSM 25203 / XCL-2) (Thiomicrospira crunogena)).